Reading from the N-terminus, the 904-residue chain is uncharacterized protein (904 aa).

Disordered regions lie at residues 247–275 (KIGKSRTTEDVSMPPLHRGVGTPANSLEF) and 328–360 (GDSQTPGLHYPPTAGAQTLSPTSHPSSANHHFS). Over residues 342–360 (GAQTLSPTSHPSSANHHFS) the composition is skewed to polar residues. Residues 778–798 (VVQGMILMFAGGKLIFGGRVL) traverse the membrane as a helical segment.

Its subcellular location is the membrane. This is an uncharacterized protein from Homo sapiens (Human).